A 435-amino-acid polypeptide reads, in one-letter code: Palmitoyltransferase pfa4 (435 aa).

Residues 1–10 (MLCSSFSVSR) lie on the Cytoplasmic side of the membrane. Residues 11–31 (LAIPAVCILIAFLAYTSQIFF) form a helical membrane-spanning segment. At 32 to 48 (LYFEDAPLKEDEVWRIN) the chain is on the lumenal side. The helical transmembrane segment at 49–69 (ILAICIWICYYRACTVDPGHV) threads the bilayer. Over 70–129 (PKGWMPSDRERLKADRASGRQRWCRRCEAYKPPRAHHCKTCERCVPKMDHHCPWTSNCVS) the chain is Cytoplasmic. One can recognise a DHHC domain in the interval 91–141 (RWCRRCEAYKPPRAHHCKTCERCVPKMDHHCPWTSNCVSHFTFPHFARFLF). Catalysis depends on Cys-121, which acts as the S-palmitoyl cysteine intermediate. The chain crosses the membrane as a helical span at residues 130 to 150 (HFTFPHFARFLFYAVVGIAYL). At 151–179 (ETRLWQRVSKVWGSRHLPSYLGPSMGQIG) the chain is on the lumenal side. Residues 180–200 (HLFVLFVTNSLTLFALSLLLL) traverse the membrane as a helical segment. The Cytoplasmic segment spans residues 201 to 435 (RTLWSLGSNT…QRAKRQHLSQ (235 aa)). A compositionally biased stretch (basic and acidic residues) spans 359–368 (RKPFHVRLEE). Positions 359–408 (RKPFHVRLEEYSNGSSDAEADTGSDDDSDHGEEGWKNSEGERLRDFGVDE) are disordered. Residues 376–388 (AEADTGSDDDSDH) show a composition bias toward acidic residues. Residues 389–405 (GEEGWKNSEGERLRDFG) are compositionally biased toward basic and acidic residues.

The protein belongs to the DHHC palmitoyltransferase family. PFA4 subfamily.

The protein resides in the endoplasmic reticulum membrane. The enzyme catalyses L-cysteinyl-[protein] + hexadecanoyl-CoA = S-hexadecanoyl-L-cysteinyl-[protein] + CoA. Functionally, mediates the reversible addition of palmitate to target proteins, thereby regulating their membrane association and biological function. The chain is Palmitoyltransferase pfa4 from Emericella nidulans (strain FGSC A4 / ATCC 38163 / CBS 112.46 / NRRL 194 / M139) (Aspergillus nidulans).